Here is a 489-residue protein sequence, read N- to C-terminus: Rhamnulokinase (489 aa).

13-17 provides a ligand contact to ATP; it reads ASSGR. Cys-68 and Cys-222 are joined by a disulfide. Substrate contacts are provided by residues Gly-83 and 236-238; that span reads HDT. The Proton acceptor role is filled by Asp-237. An ATP-binding site is contributed by Thr-259. Position 296 (Asn-296) interacts with substrate. Gln-304 provides a ligand contact to ATP. Cys-353 and Cys-370 form a disulfide bridge. Gly-402 is a binding site for ATP. Cys-413 and Cys-417 are oxidised to a cystine.

This sequence belongs to the rhamnulokinase family. Mg(2+) serves as cofactor.

It catalyses the reaction L-rhamnulose + ATP = L-rhamnulose 1-phosphate + ADP + H(+). It functions in the pathway carbohydrate degradation; L-rhamnose degradation; glycerone phosphate from L-rhamnose: step 2/3. Functionally, involved in the catabolism of L-rhamnose (6-deoxy-L-mannose). Catalyzes the transfer of the gamma-phosphate group from ATP to the 1-hydroxyl group of L-rhamnulose to yield L-rhamnulose 1-phosphate. This chain is Rhamnulokinase, found in Shigella flexneri serotype 5b (strain 8401).